A 159-amino-acid polypeptide reads, in one-letter code: 17.7 kDa class I heat shock protein (159 aa).

In terms of domain architecture, sHSP spans 45-159 (DAAAFAGARI…PDVKSIQISG (115 aa)).

It belongs to the small heat shock protein (HSP20) family. In terms of assembly, may form oligomeric structures.

The protein localises to the cytoplasm. This chain is 17.7 kDa class I heat shock protein (HSP17.7), found in Oryza sativa subsp. japonica (Rice).